Consider the following 201-residue polypeptide: FMN-dependent NADH:quinone oxidoreductase (201 aa).

FMN is bound by residues serine 9, 16–18 (SVS), and 93–96 (MYNF).

It belongs to the azoreductase type 1 family. In terms of assembly, homodimer. It depends on FMN as a cofactor.

It catalyses the reaction 2 a quinone + NADH + H(+) = 2 a 1,4-benzosemiquinone + NAD(+). It carries out the reaction N,N-dimethyl-1,4-phenylenediamine + anthranilate + 2 NAD(+) = 2-(4-dimethylaminophenyl)diazenylbenzoate + 2 NADH + 2 H(+). Quinone reductase that provides resistance to thiol-specific stress caused by electrophilic quinones. Its function is as follows. Also exhibits azoreductase activity. Catalyzes the reductive cleavage of the azo bond in aromatic azo compounds to the corresponding amines. The polypeptide is FMN-dependent NADH:quinone oxidoreductase (Gluconacetobacter diazotrophicus (strain ATCC 49037 / DSM 5601 / CCUG 37298 / CIP 103539 / LMG 7603 / PAl5)).